The primary structure comprises 215 residues: FBD domain-containing protein At3g58975 (215 aa).

The 78-residue stretch at 122–199 (RSLTSCPVKK…KLSSCNVQLL (78 aa)) folds into the FBD domain.

The sequence is that of FBD domain-containing protein At3g58975 from Arabidopsis thaliana (Mouse-ear cress).